The primary structure comprises 63 residues: Serine protease inhibitor 3 (63 aa).

An N-terminal signal peptide occupies residues 1 to 23 (MAKLLAVFLVLLIAALVCEQALA). Intrachain disulfides connect cysteine 24–cysteine 39, cysteine 34–cysteine 52, and cysteine 37–cysteine 47. Positions 24–55 (CTPGSRKYDGCNWCTCSSGGAWICTLKYCPPS) constitute a Pacifastin domain.

It belongs to the protease inhibitor I19 family. As to expression, expressed in hemolymph, ovaries, testes and fat body of adults but are absent in the gut. Also present in larval hemolymph and fat body.

Its subcellular location is the secreted. Its function is as follows. In vitro, active against alpha-chymotrypsin. This Schistocerca gregaria (Desert locust) protein is Serine protease inhibitor 3.